A 197-amino-acid polypeptide reads, in one-letter code: Protein U63 (197 aa).

Belongs to the herpesviridae UL92 family.

The protein is Protein U63 of Elephas maximus (Indian elephant).